Here is a 754-residue protein sequence, read N- to C-terminus: ATP-dependent zinc metalloprotease FtsH (754 aa).

Residues 1–9 (MKQRMKKPS) are Cytoplasmic-facing. Residues 10-30 (LGTFILILILIGILAYVLWQF) form a helical membrane-spanning segment. Topologically, residues 31 to 186 (LSPKLGYKSL…FDRPRGNFLS (156 aa)) are extracellular. A helical transmembrane segment spans residues 187 to 207 (SFIVPYIPFLLISLFGFWLFF). The Cytoplasmic segment spans residues 208–754 (RLSQNSQAGG…ESKIDSSKEQ (547 aa)). 277-284 (GPPGTGKT) lines the ATP pocket. His499 is a Zn(2+) binding site. Glu500 is a catalytic residue. His503 and Asp577 together coordinate Zn(2+). The interval 713–754 (QEKSYENEDQNQNSLEAINYNIDDQDDDKNDSESKIDSSKEQ) is disordered. Residues 743–754 (DSESKIDSSKEQ) are compositionally biased toward basic and acidic residues.

It in the central section; belongs to the AAA ATPase family. This sequence in the C-terminal section; belongs to the peptidase M41 family. As to quaternary structure, homohexamer. The cofactor is Zn(2+).

It localises to the cell membrane. In terms of biological role, acts as a processive, ATP-dependent zinc metallopeptidase for both cytoplasmic and membrane proteins. Plays a role in the quality control of integral membrane proteins. This Mesomycoplasma conjunctivae (strain ATCC 25834 / NCTC 10147 / HRC/581) (Mycoplasma conjunctivae) protein is ATP-dependent zinc metalloprotease FtsH.